The sequence spans 815 residues: Cell division control protein 53 (815 aa).

A required for interaction with SKP1/CBF3D and F-box protein region spans residues 9–280 (DDLEATWNFI…WDDHTKKPLS (272 aa)). The tract at residues 448–748 (KKATKPEVAS…IEKELNTERQ (301 aa)) is required for interaction with CDC34/UBC3. The region spanning 746–807 (ERQIFLEACI…QKGYLQRGDD (62 aa)) is the Cullin neddylation domain. A Glycyl lysine isopeptide (Lys-Gly) (interchain with G-Cter in NEDD8) cross-link involves residue lysine 760.

This sequence belongs to the cullin family. In terms of assembly, component of multiple SCF (SKP1-CUL1-F-box) E3 ubiquitin-protein ligase complexes formed of CUL1, SKP1/HRT1, RBX1 and a variable F-box domain-containing protein as substrate-specific adapter. Component of the SCF(CDC4) complex containing CDC4. Component of the SCF(MET30) complex containing MET30. Component of the SCF(GRR1) complex containing GRR1. Component of the probable SCF(DIA2) complex containing DIA2. Component of the probable SCF(YDR131C) complex containing YDR131C. Component of the probable SCF(YDR306C) complex containing YDR306C. Component of the probable SCF(YLR224W) complex containing YLR224W. Component of the probable SCF(YJL149W) complex containing YJL149W. Component of the probable SCF(YNL311C) complex containing YNL311C. Component of the probable SCF(MDM30) complex containing MDM30. Component of the probable SCF(UFO1) complex containing UFO1. Component of the probable SCF(HRT3) complex containing HRT3. Component of the probable SCF(YBR280C) complex containing YBR280C. Component of the probable SCF(YBR352W) complex containing YBR352W. Interacts with DCN1, YBR280C, YLR224W and YLR352W. The unneddylated form interacts with LAG2/CAND1 and the interaction mediates the exchange of the F-box substrate-specific subunit. Neddylated; enhancing the ubiquitin-ligase activity.

It localises to the cytoplasm. The protein localises to the nucleus. Its function is as follows. Core component of multiple cullin-RING-based SCF (SKP1-CUL1-F-box) E3 ubiquitin-protein ligase complexes which mediate the ubiquitination and subsequent proteasomal degradation of target proteins. As a scaffold protein may contribute to catalysis through positioning of the substrate and the ubiquitin-conjugating enzyme. The SCF complex associates with CDC34 as the E2 ubiquitin-conjugating enzyme. The functional specificity of the SCF complex depends on the type of F-box protein. SCF(CDC4) controls the G1-to-S phase transition; it directs ubiquitination of the phosphorylated CDK inhibitor SIC1 and of CDC6. SCF(CDC4) directs ubiquitination of GCN4. SCF(GRR1) directs ubiquitination of phosphorylated CLN1, CLN2 and GIC2. SCF(MET30) directs ubiquitination of MET4. SCF(DIA2) is specifically involved in the pheromone induced degradation of phosphorylated TEC1. SCF(MDM30) seems to direct ubiquitination of FZ01. Involved in the regulation of methionine biosynthesis genes. The protein is Cell division control protein 53 (CDC53) of Saccharomyces cerevisiae (strain ATCC 204508 / S288c) (Baker's yeast).